The primary structure comprises 41 residues: Large ribosomal subunit protein bL36 (41 aa).

Belongs to the bacterial ribosomal protein bL36 family.

In Zymomonas mobilis subsp. mobilis (strain ATCC 31821 / ZM4 / CP4), this protein is Large ribosomal subunit protein bL36.